A 282-amino-acid polypeptide reads, in one-letter code: HTH-type transcriptional activator RhaR (282 aa).

An HTH araC/xylS-type domain is found at 179–277; the sequence is DKLITRLAAS…GMTPSQWRHL (99 aa). DNA-binding regions (H-T-H motif) lie at residues 196–217 and 244–267; these read DKFC…RQQT and ISDI…TRET.

Binds DNA as a dimer.

The protein resides in the cytoplasm. In terms of biological role, activates expression of the rhaSR operon in response to L-rhamnose. This chain is HTH-type transcriptional activator RhaR, found in Shigella dysenteriae serotype 1 (strain Sd197).